The chain runs to 391 residues: Lipid-A-disaccharide synthase (391 aa).

This sequence belongs to the LpxB family.

It catalyses the reaction a lipid X + a UDP-2-N,3-O-bis[(3R)-3-hydroxyacyl]-alpha-D-glucosamine = a lipid A disaccharide + UDP + H(+). It functions in the pathway bacterial outer membrane biogenesis; LPS lipid A biosynthesis. In terms of biological role, condensation of UDP-2,3-diacylglucosamine and 2,3-diacylglucosamine-1-phosphate to form lipid A disaccharide, a precursor of lipid A, a phosphorylated glycolipid that anchors the lipopolysaccharide to the outer membrane of the cell. The protein is Lipid-A-disaccharide synthase of Aromatoleum aromaticum (strain DSM 19018 / LMG 30748 / EbN1) (Azoarcus sp. (strain EbN1)).